The primary structure comprises 250 residues: MWLGVITLFPEMFRAITDFGVTGRAIKNGLLELHTWNPRDFTHDRHRTVDDRPYGGGPGMLMMVQPLKDAIQAARTAAGDGAKVIYLSPQGRKLTQRGATELAETQKLILVCGRYEGIDERIIQTEVDEEWSIGDYVLSGGELPAMTLIDAVSRLVPGVLGKQASAEQDSFSDGLLDCPHYTRPESLDGLEVPAVLLGGNHEDIRRWRLKQSLGRTFLRRPELFENLALTDEQTRLLAQFVDEMDSPQKS.

S-adenosyl-L-methionine is bound by residues Gly-113 and 133–138 (IGDYVL).

Belongs to the RNA methyltransferase TrmD family. Homodimer.

It is found in the cytoplasm. It carries out the reaction guanosine(37) in tRNA + S-adenosyl-L-methionine = N(1)-methylguanosine(37) in tRNA + S-adenosyl-L-homocysteine + H(+). Its function is as follows. Specifically methylates guanosine-37 in various tRNAs. This chain is tRNA (guanine-N(1)-)-methyltransferase, found in Shewanella amazonensis (strain ATCC BAA-1098 / SB2B).